The following is a 245-amino-acid chain: Probable phosphatase YcdX (245 aa).

The Zn(2+) site is built by histidine 7, histidine 9, histidine 15, histidine 40, glutamate 73, histidine 101, histidine 131, aspartate 192, and histidine 194.

The protein belongs to the PHP family. As to quaternary structure, homotrimer. Zn(2+) serves as cofactor.

The protein is Probable phosphatase YcdX of Escherichia coli O17:K52:H18 (strain UMN026 / ExPEC).